A 467-amino-acid polypeptide reads, in one-letter code: Trigger factor (467 aa).

The 82-residue stretch at 162-243 folds into the PPIase FKBP-type domain; that stretch reads GDFVSIDLSA…LNSVKERHLP (82 aa). Acidic residues predominate over residues 426-435; it reads EEGNELDLDE. A disordered region spans residues 426–467; that stretch reads EEGNELDLDELFGTQAGEEQGEQAEGTEATDEQSAKADAKAE. Over residues 436-452 the composition is skewed to low complexity; sequence LFGTQAGEEQGEQAEGT. Residues 458 to 467 show a composition bias toward basic and acidic residues; sequence QSAKADAKAE.

It belongs to the FKBP-type PPIase family. Tig subfamily.

The protein resides in the cytoplasm. It carries out the reaction [protein]-peptidylproline (omega=180) = [protein]-peptidylproline (omega=0). In terms of biological role, involved in protein export. Acts as a chaperone by maintaining the newly synthesized protein in an open conformation. Functions as a peptidyl-prolyl cis-trans isomerase. The chain is Trigger factor from Saccharopolyspora erythraea (strain ATCC 11635 / DSM 40517 / JCM 4748 / NBRC 13426 / NCIMB 8594 / NRRL 2338).